Reading from the N-terminus, the 99-residue chain is Aspartyl/glutamyl-tRNA(Asn/Gln) amidotransferase subunit C (99 aa).

This sequence belongs to the GatC family. In terms of assembly, heterotrimer of A, B and C subunits.

The catalysed reaction is L-glutamyl-tRNA(Gln) + L-glutamine + ATP + H2O = L-glutaminyl-tRNA(Gln) + L-glutamate + ADP + phosphate + H(+). The enzyme catalyses L-aspartyl-tRNA(Asn) + L-glutamine + ATP + H2O = L-asparaginyl-tRNA(Asn) + L-glutamate + ADP + phosphate + 2 H(+). Allows the formation of correctly charged Asn-tRNA(Asn) or Gln-tRNA(Gln) through the transamidation of misacylated Asp-tRNA(Asn) or Glu-tRNA(Gln) in organisms which lack either or both of asparaginyl-tRNA or glutaminyl-tRNA synthetases. The reaction takes place in the presence of glutamine and ATP through an activated phospho-Asp-tRNA(Asn) or phospho-Glu-tRNA(Gln). The sequence is that of Aspartyl/glutamyl-tRNA(Asn/Gln) amidotransferase subunit C from Albidiferax ferrireducens (strain ATCC BAA-621 / DSM 15236 / T118) (Rhodoferax ferrireducens).